Consider the following 246-residue polypeptide: tRNA pseudouridine synthase A (246 aa).

The Nucleophile role is filled by aspartate 52. Tyrosine 111 contacts substrate.

This sequence belongs to the tRNA pseudouridine synthase TruA family. In terms of assembly, homodimer.

It catalyses the reaction uridine(38/39/40) in tRNA = pseudouridine(38/39/40) in tRNA. Formation of pseudouridine at positions 38, 39 and 40 in the anticodon stem and loop of transfer RNAs. The protein is tRNA pseudouridine synthase A of Rhodopseudomonas palustris (strain BisA53).